We begin with the raw amino-acid sequence, 351 residues long: Histidine protein kinase SaeS (351 aa).

A run of 2 helical transmembrane segments spans residues 9-29 (IIIGVVSSILLTSTILAIAYI) and 40-60 (TLTLTTIITSCLTLLICSIFI). The 54-residue stretch at 61–114 (NPLIQKIKQFNIKTKQFANGNYASNDKTFNSPKEIYELNQSFNKMASEITQQMN) folds into the HAMP domain. A Histidine kinase domain is found at 129–348 (NLAHDLKTPL…TMTVTLHKLD (220 aa)). Phosphohistidine; by autocatalysis is present on His-132.

Autophosphorylated.

It localises to the cell membrane. It catalyses the reaction ATP + protein L-histidine = ADP + protein N-phospho-L-histidine.. Member of the two-component regulatory system SaeR/SaeS involved in the regulation of staphylococcal virulence factors in a strain-dependent fashion. Probably functions as a membrane-associated protein kinase that upon sensing the appropriate signal, autophosphorylates and in turn activates the cytosolic response regulator SaeR. The sequence is that of Histidine protein kinase SaeS (saeS) from Staphylococcus aureus (strain MRSA252).